We begin with the raw amino-acid sequence, 480 residues long: Sialyltransferase-like protein 5 (480 aa).

Residues 1-17 (MARAPPPLSSLPPPPRR) are Cytoplasmic-facing. Residues 18–38 (PTVVLLLGLALAFCLAVLSIQ) form a signal-anchor for type II membrane protein membrane-spanning segment. Residues 39–480 (SSFFTAPRLA…VCVRHERSSS (442 aa)) lie on the Lumenal side of the membrane. N-linked (GlcNAc...) asparagine glycosylation is found at asparagine 98, asparagine 130, asparagine 165, and asparagine 321.

The protein belongs to the glycosyltransferase 29 family.

It is found in the golgi apparatus membrane. In terms of biological role, may possess sialyltransferase-like activity in vitro. This Oryza sativa subsp. japonica (Rice) protein is Sialyltransferase-like protein 5.